The chain runs to 273 residues: NH(3)-dependent NAD(+) synthetase (273 aa).

Glycine 34–serine 41 serves as a coordination point for ATP. Aspartate 40 contributes to the Mg(2+) binding site. Residue arginine 116 participates in deamido-NAD(+) binding. Residue threonine 136 participates in ATP binding. Glutamate 141 provides a ligand contact to Mg(2+). 2 residues coordinate ATP: lysine 165 and serine 187.

This sequence belongs to the NAD synthetase family. In terms of assembly, homodimer.

The enzyme catalyses deamido-NAD(+) + NH4(+) + ATP = AMP + diphosphate + NAD(+) + H(+). It functions in the pathway cofactor biosynthesis; NAD(+) biosynthesis; NAD(+) from deamido-NAD(+) (ammonia route): step 1/1. Functionally, catalyzes the ATP-dependent amidation of deamido-NAD to form NAD. Uses ammonia as a nitrogen source. This is NH(3)-dependent NAD(+) synthetase from Trichlorobacter lovleyi (strain ATCC BAA-1151 / DSM 17278 / SZ) (Geobacter lovleyi).